Here is a 120-residue protein sequence, read N- to C-terminus: Large ribosomal subunit protein uL18 (120 aa).

The protein belongs to the universal ribosomal protein uL18 family. In terms of assembly, part of the 50S ribosomal subunit; part of the 5S rRNA/L5/L18/L25 subcomplex. Contacts the 5S and 23S rRNAs.

This is one of the proteins that bind and probably mediate the attachment of the 5S RNA into the large ribosomal subunit, where it forms part of the central protuberance. This is Large ribosomal subunit protein uL18 from Finegoldia magna (strain ATCC 29328 / DSM 20472 / WAL 2508) (Peptostreptococcus magnus).